Reading from the N-terminus, the 456-residue chain is Probable transcription factor At3g04930 (456 aa).

Residues 1–71 (MTSDHRDALF…LNSPSTSSLP (71 aa)) form a disordered region. Composition is skewed to acidic residues over residues 15–38 (ESPD…DLRD) and 50–62 (AEAE…EEDL). Phosphoserine is present on Ser16.

It belongs to the GeBP family.

In Arabidopsis thaliana (Mouse-ear cress), this protein is Probable transcription factor At3g04930.